Reading from the N-terminus, the 302-residue chain is Meiotically up-regulated gene 129 protein (302 aa).

In terms of biological role, has a role in meiosis. The chain is Meiotically up-regulated gene 129 protein (mug129) from Schizosaccharomyces pombe (strain 972 / ATCC 24843) (Fission yeast).